The following is a 195-amino-acid chain: Large ribosomal subunit protein uL18 (195 aa).

Belongs to the universal ribosomal protein uL18 family. As to quaternary structure, part of the 50S ribosomal subunit. Contacts the 5S and 23S rRNAs.

Functionally, this is one of the proteins that bind and probably mediate the attachment of the 5S RNA into the large ribosomal subunit, where it forms part of the central protuberance. This is Large ribosomal subunit protein uL18 from Korarchaeum cryptofilum (strain OPF8).